The primary structure comprises 125 residues: Morphine 6-dehydrogenase (125 aa).

NADP(+) contacts are provided by residues 9-18 (GHSIPVLGFI) and 74-111 (SALGSSRDPWKQSPALIALRYQLQRGVVVLAKSFIERE).

Belongs to the aldo/keto reductase family. Monomer. Post-translationally, the N-terminus is blocked.

Its subcellular location is the cytoplasm. The enzyme catalyses morphine + NAD(+) = morphinone + NADH + H(+). The catalysed reaction is morphine + NADP(+) = morphinone + NADPH + H(+). Strongly inhibited by sulfhydryl reagents and quercetin, but not by pyrazole, barbital and indomethacine. Catalyzes the dehydrogenation of morphine to morphinone. Uses both NAD and NADP, but the activity is much greater with NAD than with NADP. The chain is Morphine 6-dehydrogenase from Oryctolagus cuniculus (Rabbit).